Reading from the N-terminus, the 405-residue chain is Multifunctional CCA protein (405 aa).

Positions 8 and 11 each coordinate ATP. Positions 8 and 11 each coordinate CTP. Mg(2+)-binding residues include aspartate 21 and aspartate 23. Positions 91, 137, and 140 each coordinate ATP. Residues arginine 91, arginine 137, and arginine 140 each contribute to the CTP site. One can recognise an HD domain in the interval 225–326 (TGVHAMLVLD…LRLLRECDAL (102 aa)).

It belongs to the tRNA nucleotidyltransferase/poly(A) polymerase family. Bacterial CCA-adding enzyme type 1 subfamily. In terms of assembly, monomer. Can also form homodimers and oligomers. It depends on Mg(2+) as a cofactor. Ni(2+) serves as cofactor.

It carries out the reaction a tRNA precursor + 2 CTP + ATP = a tRNA with a 3' CCA end + 3 diphosphate. The catalysed reaction is a tRNA with a 3' CCA end + 2 CTP + ATP = a tRNA with a 3' CCACCA end + 3 diphosphate. Catalyzes the addition and repair of the essential 3'-terminal CCA sequence in tRNAs without using a nucleic acid template. Adds these three nucleotides in the order of C, C, and A to the tRNA nucleotide-73, using CTP and ATP as substrates and producing inorganic pyrophosphate. tRNA 3'-terminal CCA addition is required both for tRNA processing and repair. Also involved in tRNA surveillance by mediating tandem CCA addition to generate a CCACCA at the 3' terminus of unstable tRNAs. While stable tRNAs receive only 3'-terminal CCA, unstable tRNAs are marked with CCACCA and rapidly degraded. This chain is Multifunctional CCA protein, found in Laribacter hongkongensis (strain HLHK9).